Here is a 196-residue protein sequence, read N- to C-terminus: MSPLPPSAEACRDELLNRLAREAYRHGDFTLASGRQSNHYVNCKPVSLSGSGLELLGLALLKYVEPDAVCVAGLTLGADPLVSAVAMAAAQAERTLNALIVRKQAKGHGTAAWLEGPLPPSGARITVLEDVVTTGGSSLKAVQQLRETGYLVTRVVTIVDRQEGGEEALNAAELELVSLYQLNQVAERARQLETET.

Residues Arg102, Lys103, Lys106, His108, and 129–137 (EDVVTTGGS) contribute to the 5-phospho-alpha-D-ribose 1-diphosphate site. Residues Thr133 and Arg161 each coordinate orotate.

Belongs to the purine/pyrimidine phosphoribosyltransferase family. PyrE subfamily. Homodimer. Mg(2+) serves as cofactor.

The catalysed reaction is orotidine 5'-phosphate + diphosphate = orotate + 5-phospho-alpha-D-ribose 1-diphosphate. The protein operates within pyrimidine metabolism; UMP biosynthesis via de novo pathway; UMP from orotate: step 1/2. Catalyzes the transfer of a ribosyl phosphate group from 5-phosphoribose 1-diphosphate to orotate, leading to the formation of orotidine monophosphate (OMP). The sequence is that of Orotate phosphoribosyltransferase from Prochlorococcus marinus (strain MIT 9303).